Reading from the N-terminus, the 594-residue chain is MNGDSLLPYYTAQSGSSMSMFNTTMGRLQRQLYKGEYDIFKYAPIFGSDFIQITKRGEVIDVHNRVRMVTMGIARTSPILPLPDVMLLARPATGCEEYAGHGQATKRKKRKAAKNLELTRLLPLKFVRISVHNHEKQQLRLKFATGRSCYLQLCPALNTRDDLFAYWEKLIYLLRPPMESNSSTCGIPAEDMMWMPVFQEDRRSLEAVDLQGKGDQDQVSIRSLHMVSEVCGATSAAYAGGEGLQHDFHKPTNVLNVSIPKTSTELAEEPATGVTKEAAAAGAAAGAATGTVAGALSVAAANSAPGQVSVAIAGVATIGAGGSKSNMAIAGTASMAPNSTKVAVAGAAGKSSEHVSSTSMSLSREGSMSLAIAGVELTSRTAAETDMDAAAGLPVSTRQSKSSLSGQHGRERTQASAEACKEGRERREKDKALGRSSRRRRTGESRHKTRGDKIARKSSSRSSFSHRASRDGKKEKGCSSPGSSRHGESHKGVSHTPISKESRTSHKSGRSSSTTSSGSSKRLGRISSFLRNVRANLTTKAVGTPHGRDVDIMAKTVERSTNVANAETAEGGQGLEMVGSMTPDIMETMTFETH.

Residues 390–525 (AAGLPVSTRQ…SSGSSKRLGR (136 aa)) form a disordered region. The segment covering 396–406 (STRQSKSSLSG) has biased composition (polar residues). Basic and acidic residues-rich tracts occupy residues 408-433 (HGRE…DKAL), 442-455 (TGES…DKIA), and 468-477 (ASRDGKKEKG). Residues 510-521 (RSSSTTSSGSSK) show a composition bias toward low complexity.

This sequence belongs to the GARIN family. In terms of assembly, interacts (via N-terminus) with RAB2B (in GTP-bound form).

Its subcellular location is the golgi apparatus. RAB2B effector protein required for the compacted Golgi morphology, probably through interaction with small GTPase RAB2B. The polypeptide is Golgi-associated RAB2 interactor protein 4 (GARIN4) (Macaca fascicularis (Crab-eating macaque)).